The primary structure comprises 269 residues: 4-hydroxy-tetrahydrodipicolinate reductase (269 aa).

NAD(+) is bound by residues 12-17, 102-104, and 126-129; these read GGSGRM, GTT, and SPNM. Histidine 159 serves as the catalytic Proton donor/acceptor. Histidine 160 contacts (S)-2,3,4,5-tetrahydrodipicolinate. The active-site Proton donor is the lysine 163. 169-170 is a (S)-2,3,4,5-tetrahydrodipicolinate binding site; the sequence is GT.

The protein belongs to the DapB family.

Its subcellular location is the cytoplasm. The enzyme catalyses (S)-2,3,4,5-tetrahydrodipicolinate + NAD(+) + H2O = (2S,4S)-4-hydroxy-2,3,4,5-tetrahydrodipicolinate + NADH + H(+). The catalysed reaction is (S)-2,3,4,5-tetrahydrodipicolinate + NADP(+) + H2O = (2S,4S)-4-hydroxy-2,3,4,5-tetrahydrodipicolinate + NADPH + H(+). The protein operates within amino-acid biosynthesis; L-lysine biosynthesis via DAP pathway; (S)-tetrahydrodipicolinate from L-aspartate: step 4/4. In terms of biological role, catalyzes the conversion of 4-hydroxy-tetrahydrodipicolinate (HTPA) to tetrahydrodipicolinate. This Leptospira borgpetersenii serovar Hardjo-bovis (strain JB197) protein is 4-hydroxy-tetrahydrodipicolinate reductase.